The following is a 274-amino-acid chain: MIEIKKAKPTSPGRRHVVSVKNTELHTGKPFKGLVEVKKSKAGRNNTGRITVRHQGGGHKQHYRVVDFKRNKDDITAKVERIEYDPNRSANIALVLYADGERRYIVAPKGLKKDMSVISGEKVDVAVGNCMPLRNIPLGTVIHNIEMKPKKGAQMIRSAGTFAQLVGKDNAYAIIRLRSGEMRRVLLDCRAVIGVVSNSEHNLKSLGKAGAKRWRGIRPTVRGVAMNPVDHPHGGGEGRTSGGRHPVTPWGIPTKGYKTRRNKRSNKLIVQKRK.

The interval 224 to 274 (VAMNPVDHPHGGGEGRTSGGRHPVTPWGIPTKGYKTRRNKRSNKLIVQKRK) is disordered. Residues 257 to 274 (YKTRRNKRSNKLIVQKRK) show a composition bias toward basic residues.

Belongs to the universal ribosomal protein uL2 family. In terms of assembly, part of the 50S ribosomal subunit. Forms a bridge to the 30S subunit in the 70S ribosome.

Its function is as follows. One of the primary rRNA binding proteins. Required for association of the 30S and 50S subunits to form the 70S ribosome, for tRNA binding and peptide bond formation. It has been suggested to have peptidyltransferase activity; this is somewhat controversial. Makes several contacts with the 16S rRNA in the 70S ribosome. The sequence is that of Large ribosomal subunit protein uL2 from Francisella tularensis subsp. mediasiatica (strain FSC147).